A 953-amino-acid polypeptide reads, in one-letter code: uncharacterized protein (953 aa).

Transmembrane regions (helical) follow at residues valine 23–isoleucine 43, tyrosine 103–leucine 123, glycine 148–isoleucine 168, valine 392–isoleucine 412, leucine 435–leucine 455, alanine 481–threonine 501, isoleucine 540–phenylalanine 560, leucine 575–phenylalanine 595, isoleucine 599–tyrosine 619, leucine 642–valine 662, and tryptophan 666–leucine 686. Residues valine 910–valine 953 are disordered. Residues proline 942–valine 953 show a composition bias toward basic and acidic residues. Serine 949 bears the Phosphoserine mark.

Belongs to the CSC1 (TC 1.A.17) family.

Its subcellular location is the membrane. Acts as an osmosensitive calcium-permeable cation channel. This is an uncharacterized protein from Saccharomyces cerevisiae (strain ATCC 204508 / S288c) (Baker's yeast).